The sequence spans 385 residues: Deoxyguanosinetriphosphate triphosphohydrolase-like protein (385 aa).

An HD domain is found at 75-197 (RLTHTLEVGQ…VDAADALAYT (123 aa)).

This sequence belongs to the dGTPase family. Type 2 subfamily.

This is Deoxyguanosinetriphosphate triphosphohydrolase-like protein from Deinococcus geothermalis (strain DSM 11300 / CIP 105573 / AG-3a).